The following is a 300-amino-acid chain: Recombination-promoting nuclease RpnC (300 aa).

Belongs to the Rpn/YhgA-like nuclease family.

A low activity DNA endonuclease yielding 3'-hydroxyl ends. Upon expression enhances RecA-independent DNA recombination 2.9-fold, concomitantly reducing viability by 59% and inducing DNA damage as measured by induction of the SOS repair response. This is Recombination-promoting nuclease RpnC from Escherichia coli (strain K12).